A 426-amino-acid chain; its full sequence is Glutamate-1-semialdehyde 2,1-aminomutase (426 aa).

Lys265 carries the post-translational modification N6-(pyridoxal phosphate)lysine.

The protein belongs to the class-III pyridoxal-phosphate-dependent aminotransferase family. HemL subfamily. In terms of assembly, homodimer. Pyridoxal 5'-phosphate is required as a cofactor.

The protein localises to the cytoplasm. It catalyses the reaction (S)-4-amino-5-oxopentanoate = 5-aminolevulinate. It functions in the pathway porphyrin-containing compound metabolism; protoporphyrin-IX biosynthesis; 5-aminolevulinate from L-glutamyl-tRNA(Glu): step 2/2. This chain is Glutamate-1-semialdehyde 2,1-aminomutase, found in Yersinia pseudotuberculosis serotype O:1b (strain IP 31758).